A 375-amino-acid chain; its full sequence is Queuine tRNA-ribosyltransferase (375 aa).

Aspartate 94 acts as the Proton acceptor in catalysis. Substrate is bound by residues 94-98 (DSGGF), aspartate 148, glutamine 191, and glycine 218. The tract at residues 249–255 (GVGSPDD) is RNA binding. Aspartate 268 (nucleophile) is an active-site residue. Positions 273–277 (TRIAR) are RNA binding; important for wobble base 34 recognition. The Zn(2+) site is built by cysteine 306, cysteine 308, cysteine 311, and histidine 337.

The protein belongs to the queuine tRNA-ribosyltransferase family. As to quaternary structure, homodimer. Within each dimer, one monomer is responsible for RNA recognition and catalysis, while the other monomer binds to the replacement base PreQ1. It depends on Zn(2+) as a cofactor.

It catalyses the reaction 7-aminomethyl-7-carbaguanine + guanosine(34) in tRNA = 7-aminomethyl-7-carbaguanosine(34) in tRNA + guanine. It participates in tRNA modification; tRNA-queuosine biosynthesis. Its function is as follows. Catalyzes the base-exchange of a guanine (G) residue with the queuine precursor 7-aminomethyl-7-deazaguanine (PreQ1) at position 34 (anticodon wobble position) in tRNAs with GU(N) anticodons (tRNA-Asp, -Asn, -His and -Tyr). Catalysis occurs through a double-displacement mechanism. The nucleophile active site attacks the C1' of nucleotide 34 to detach the guanine base from the RNA, forming a covalent enzyme-RNA intermediate. The proton acceptor active site deprotonates the incoming PreQ1, allowing a nucleophilic attack on the C1' of the ribose to form the product. After dissociation, two additional enzymatic reactions on the tRNA convert PreQ1 to queuine (Q), resulting in the hypermodified nucleoside queuosine (7-(((4,5-cis-dihydroxy-2-cyclopenten-1-yl)amino)methyl)-7-deazaguanosine). This Thermoanaerobacter pseudethanolicus (strain ATCC 33223 / 39E) (Clostridium thermohydrosulfuricum) protein is Queuine tRNA-ribosyltransferase.